The chain runs to 140 residues: uncharacterized protein (140 aa).

Asn86 is a glycosylation site (N-linked (GlcNAc...) asparagine; by host). Residues 92-112 (IFNGLGFILIVIFIYLLLITL) form a helical membrane-spanning segment.

Belongs to the asfivirus B117L family.

It is found in the host membrane. The protein localises to the virion. This is an uncharacterized protein from African swine fever virus (isolate Pig/Kenya/KEN-50/1950) (ASFV).